Reading from the N-terminus, the 750-residue chain is Methylmalonyl-CoA mutase, mitochondrial (750 aa).

The N-terminal 32 residues, 1-32, are a transit peptide targeting the mitochondrion; the sequence is MLRVKNQLFLLSPHYLKQVKESSGSRLIRQRF. Glutamine 50 serves as a coordination point for malonyl-CoA. The residue at position 89 (lysine 89) is an N6-acetyllysine. Malonyl-CoA contacts are provided by residues 96–99 and 106–110; these read YPTM and TIRQY. Residue lysine 212 is modified to N6-acetyllysine. Malonyl-CoA contacts are provided by residues 216–218, arginine 228, lysine 255, histidine 265, and 304–306; these read TIQ and RLS. Lysine 335 is modified (N6-acetyllysine). Lysine 343 is subject to N6-succinyllysine. Serine 481 carries the phosphoserine modification. The residue at position 595 (lysine 595) is an N6-succinyllysine. At lysine 602 the chain carries N6-acetyllysine. Residues 614–746 form the B12-binding domain; sequence RPRLLVAKMG…DDIEKCLEKK (133 aa). Residue histidine 627 coordinates adenosylcob(III)alamin.

It belongs to the methylmalonyl-CoA mutase family. As to quaternary structure, homodimer. Interacts (the apoenzyme form) with MMAA; the interaction is GTP dependent. It depends on adenosylcob(III)alamin as a cofactor.

It is found in the mitochondrion matrix. The protein resides in the mitochondrion. It localises to the cytoplasm. It carries out the reaction (R)-methylmalonyl-CoA = succinyl-CoA. With respect to regulation, inhibited by itaconyl-CoA, a metabolite that inactivates the coenzyme B12 cofactor. In terms of biological role, catalyzes the reversible isomerization of methylmalonyl-CoA (MMCoA) (generated from branched-chain amino acid metabolism and degradation of dietary odd chain fatty acids and cholesterol) to succinyl-CoA (3-carboxypropionyl-CoA), a key intermediate of the tricarboxylic acid cycle. This Macaca fascicularis (Crab-eating macaque) protein is Methylmalonyl-CoA mutase, mitochondrial (MMUT).